The primary structure comprises 116 residues: Large ribosomal subunit protein bL17 (116 aa).

Belongs to the bacterial ribosomal protein bL17 family. In terms of assembly, part of the 50S ribosomal subunit. Contacts protein L32.

This is Large ribosomal subunit protein bL17 from Gloeobacter violaceus (strain ATCC 29082 / PCC 7421).